The chain runs to 352 residues: Non-disjunction protein 1 (352 aa).

As to quaternary structure, interacts with MPS3.

The protein localises to the nucleus. It is found in the chromosome. It localises to the telomere. Functionally, required for telomeric clustering (bouquet stage) during meiosis 1 prophase, formation and efficient homolog pairing, meiosis 1 disjunction, and telomere deletion during meiosis. Also promotes meiotic recombination. The sequence is that of Non-disjunction protein 1 (NDJ1) from Saccharomyces cerevisiae (strain ATCC 204508 / S288c) (Baker's yeast).